We begin with the raw amino-acid sequence, 72 residues long: Protein kish (72 aa).

An N-terminal signal peptide occupies residues 1 to 26 (MVAIFNFQSLLVVILLFICTCTYIRG). The Extracellular segment spans residues 27-47 (SYPSLLEVRDKHSFSGLPRKA). The helical transmembrane segment at 48–68 (AIIGERLSPWVSACCLIMGLW) threads the bilayer. Residues 69-72 (TLYN) are Cytoplasmic-facing.

It belongs to the KISH family.

The protein localises to the golgi apparatus membrane. Involved in the early part of the secretory pathway. The polypeptide is Protein kish (tmem167) (Dictyostelium discoideum (Social amoeba)).